A 311-amino-acid polypeptide reads, in one-letter code: Ribonuclease HIII (311 aa).

Residues 95–311 enclose the RNase H type-2 domain; it reads MSIVGSDEVG…NTEKAFRLLK (217 aa). A divalent metal cation-binding residues include aspartate 101, glutamate 102, and aspartate 206.

The protein belongs to the RNase HII family. RnhC subfamily. Mn(2+) is required as a cofactor. It depends on Mg(2+) as a cofactor.

Its subcellular location is the cytoplasm. The catalysed reaction is Endonucleolytic cleavage to 5'-phosphomonoester.. Endonuclease that specifically degrades the RNA of RNA-DNA hybrids. The polypeptide is Ribonuclease HIII (Bacillus cereus (strain 03BB102)).